The following is a 92-amino-acid chain: Toxin RelE3 (92 aa).

This sequence belongs to the RelE toxin family.

In terms of biological role, toxic component of a type II toxin-antitoxin (TA) system. Its toxic effect is neutralized by coexpression with cognate antitoxin RelB3 but no other ParD or RelB antitoxin. In Caulobacter vibrioides (strain ATCC 19089 / CIP 103742 / CB 15) (Caulobacter crescentus), this protein is Toxin RelE3 (relE3).